The sequence spans 360 residues: MRVFNFSAGPAAMPEEVLRQAADEMLDWHGSGMSVMEMSHRGKEFMSIHEAALTDLRDLLGVPASHRILFLQGGGIAENAIVPMNLLGARKTADFVVTGSWSQKSFGEAKKFCAPHLAASGKTEAGFTRAPARAEWQLSDDPAYVHLCTNETIDGVETFEIPDLGDVPLVADVSSHILSRPMDVAKYGVLFGGAQKNIGMAGVTVVIVREDLLDRALSICPSAFEWKTIAANNSLYNTPPTYAIYIAGLVFQWLKRQGGLEAIEARNIEKSKLLYDTIDASSFYLNKVEPAARSRMNVPFFLADETRNEDFLAGAKARGLLQLKGHKSVGGMRASIYNAVPLEGVKALVEYMKDFEQRGA.

Residue Arg-41 participates in L-glutamate binding. Residues Trp-101, Thr-152, Asp-172, and Gln-195 each contribute to the pyridoxal 5'-phosphate site. Lys-196 is modified (N6-(pyridoxal phosphate)lysine). 237-238 lines the pyridoxal 5'-phosphate pocket; that stretch reads NT.

Belongs to the class-V pyridoxal-phosphate-dependent aminotransferase family. SerC subfamily. As to quaternary structure, homodimer. Pyridoxal 5'-phosphate is required as a cofactor.

It is found in the cytoplasm. The catalysed reaction is O-phospho-L-serine + 2-oxoglutarate = 3-phosphooxypyruvate + L-glutamate. The enzyme catalyses 4-(phosphooxy)-L-threonine + 2-oxoglutarate = (R)-3-hydroxy-2-oxo-4-phosphooxybutanoate + L-glutamate. Its pathway is amino-acid biosynthesis; L-serine biosynthesis; L-serine from 3-phospho-D-glycerate: step 2/3. It participates in cofactor biosynthesis; pyridoxine 5'-phosphate biosynthesis; pyridoxine 5'-phosphate from D-erythrose 4-phosphate: step 3/5. In terms of biological role, catalyzes the reversible conversion of 3-phosphohydroxypyruvate to phosphoserine and of 3-hydroxy-2-oxo-4-phosphonooxybutanoate to phosphohydroxythreonine. The polypeptide is Phosphoserine aminotransferase (Burkholderia cenocepacia (strain HI2424)).